The primary structure comprises 239 residues: Adapter protein MecA (239 aa).

The span at 118-128 (EQRTKEKEAQG) shows a compositional bias: basic and acidic residues. Residues 118–137 (EQRTKEKEAQGSKRQKSSAR) are disordered.

It belongs to the MecA family. Homodimer.

In terms of biological role, enables the recognition and targeting of unfolded and aggregated proteins to the ClpC protease or to other proteins involved in proteolysis. The protein is Adapter protein MecA of Staphylococcus aureus (strain bovine RF122 / ET3-1).